A 2108-amino-acid polypeptide reads, in one-letter code: General negative regulator of transcription subunit 1 (2108 aa).

Coiled coils occupy residues N795–T813 and M1021–Q1046. Residues Q1323–G1352 form a disordered region. Over residues K1329 to A1339 the composition is skewed to polar residues. Low complexity predominate over residues Q1340–G1352. T2102 carries the phosphothreonine modification.

It belongs to the CNOT1 family. As to quaternary structure, forms a NOT protein complex that comprises NOT1, NOT2, NOT3, NOT4 and NOT5. Subunit of the 1.0 MDa CCR4-NOT core complex that contains CCR4, CAF1, NOT1, NOT2, NOT3, NOT4, NOT5, CAF40 and CAF130. In the complex interacts with CCR4, POP2, NOT2, NOT4 and NOT5. The core complex probably is part of a less characterized 1.9 MDa CCR4-NOT complex.

It localises to the cytoplasm. The protein localises to the nucleus. Acts as a component of the CCR4-NOT core complex, which in the nucleus seems to be a general transcription factor, and in the cytoplasm the major mRNA deadenylase involved in mRNA turnover. The NOT protein subcomplex negatively regulates the basal and activated transcription of many genes. Preferentially affects TC-type TATA element-dependent transcription. Could directly or indirectly inhibit component(s) of the general transcription machinery. The protein is General negative regulator of transcription subunit 1 (CDC39) of Saccharomyces cerevisiae (strain ATCC 204508 / S288c) (Baker's yeast).